The following is a 210-amino-acid chain: Putative polysaccharide-binding protein (210 aa).

The first 22 residues, 1-22 (MGFLKGTAAALTLLSAAAAASA), serve as a signal peptide directing secretion. CBM1 domains lie at 23-62 (CGVL…AMPG), 63-105 (MMGQ…LANK), 125-165 (CGKE…APPP), and 166-210 (KMGE…PMHP).

The protein is Putative polysaccharide-binding protein of Porphyra purpurea (Red seaweed).